A 263-amino-acid chain; its full sequence is Small ribosomal subunit protein eS4 (263 aa).

Positions 42–104 (LPLIIFLRNR…TGEHFRLVYD (63 aa)) constitute an S4 RNA-binding domain.

The protein belongs to the eukaryotic ribosomal protein eS4 family. Component of the small ribosomal subunit.

It localises to the cytoplasm. Component of the small ribosomal subunit. The ribosome is a large ribonucleoprotein complex responsible for the synthesis of proteins in the cell. The sequence is that of Small ribosomal subunit protein eS4 (rps4) from Xenopus laevis (African clawed frog).